Here is a 370-residue protein sequence, read N- to C-terminus: Probable pectin lyase E (370 aa).

Residues C75 and C96 are joined by a disulfide bond. R245 is an active-site residue. Residue N307 is glycosylated (N-linked (GlcNAc...) asparagine). An intrachain disulfide couples C311 to C319.

The protein belongs to the polysaccharide lyase 1 family.

The protein localises to the secreted. It carries out the reaction Eliminative cleavage of (1-&gt;4)-alpha-D-galacturonan methyl ester to give oligosaccharides with 4-deoxy-6-O-methyl-alpha-D-galact-4-enuronosyl groups at their non-reducing ends.. In terms of biological role, pectinolytic enzymes consist of four classes of enzymes: pectin lyase, polygalacturonase, pectin methylesterase and rhamnogalacturonase. Among pectinolytic enzymes, pectin lyase is the most important in depolymerization of pectin, since it cleaves internal glycosidic bonds of highly methylated pectins. In Aspergillus niger, this protein is Probable pectin lyase E (pelE).